Reading from the N-terminus, the 349-residue chain is Transcription initiation factor TFIID subunit 7 (349 aa).

Residues 3-5 (KSK) carry the [KR]-[STA]-K motif motif. The disordered stretch occupies residues 105–126 (PPVEEPVASTDPKASKKKDKDK). Phosphoserine is present on residues serine 171, serine 200, serine 201, and serine 213. The interval 186-212 (EDETKEAENQGLDISSPGMSGHRQGHD) is disordered. The segment at 227-247 (SSSSEDEDETQHQDEEDINII) is disordered. Over residues 230-247 (SEDEDETQHQDEEDINII) the composition is skewed to acidic residues. A coiled-coil region spans residues 244-349 (INIIDTEEDL…QEELESLLEK (106 aa)). Position 264 is a phosphoserine (serine 264). The interval 328–349 (KEDREKEQLSSLQEELESLLEK) is disordered.

Belongs to the TAF7 family. Component of the TFIID basal transcription factor complex, composed of TATA-box-binding protein TBP, and a number of TBP-associated factors (TAFs), including TAF1, TAF2, TAF3, TAF4, TAF5, TAF6, TAF7, TAF8, TAF9, TAF10, TAF11, TAF12 and TAF13. Part of a TFIID-containing RNA polymerase II pre-initiation complex that is composed of TBP and at least GTF2A1, GTF2A2, GTF2E1, GTF2E2, GTF2F1, GTF2H2, GTF2H3, GTF2H4, GTF2H5, GTF2B, TCEA1, ERCC2, ERCC3, TAF1, TAF2, TAF3, TAF4, TAF5, TAF6, TAF7, TAF8, TAF9, TAF10, TAF11, TAF12 and TAF13. Interacts with TAF1; the interaction is direct. Interacts with TAF1, TAF5, TAF11, TAF12, and TAF13, but not with TAF10 or TBP. Component of some MLL1/MLL complex, at least composed of the core components KMT2A/MLL1, ASH2L, HCFC1/HCF1, WDR5 and RBBP5, as well as the facultative components BACC1, CHD8, E2F6, HSP70, INO80C, KANSL1, LAS1L, MAX, MCRS1, MGA, MYST1/MOF, PELP1, PHF20, PRP31, RING2, RUVB1/TIP49A, RUVB2/TIP49B, SENP3, TAF1, TAF4, TAF6, TAF7, TAF9 and TEX10. Interacts with CIITA and TAF1 and inhibits their acetyltransferase activity, and behaving as a repressor of CIITA- and TAF1-regulated promoters. In terms of processing, phosphorylated by CIITA. Phosphorylation at Ser-264 by TAF1 in early G1 phase disrupts binding to TAF1. Post-translationally, ubiquitinated by TRIM26; leading to proteasomal degradation. Ubiquitous.

The protein resides in the nucleus. Functionally, the TFIID basal transcription factor complex plays a major role in the initiation of RNA polymerase II (Pol II)-dependent transcription. TFIID recognizes and binds promoters with or without a TATA box via its subunit TBP, a TATA-box-binding protein, and promotes assembly of the pre-initiation complex (PIC). The TFIID complex consists of TBP and TBP-associated factors (TAFs), including TAF1, TAF2, TAF3, TAF4, TAF5, TAF6, TAF7, TAF8, TAF9, TAF10, TAF11, TAF12 and TAF13. TAF7 forms a promoter DNA binding subcomplex of TFIID, together with TAF1 and TAF2. Part of a TFIID complex containing TAF10 (TFIID alpha) and a TFIID complex lacking TAF10 (TFIID beta). The sequence is that of Transcription initiation factor TFIID subunit 7 (TAF7) from Homo sapiens (Human).